Here is a 396-residue protein sequence, read N- to C-terminus: NADH-quinone oxidoreductase subunit D 2 (396 aa).

Belongs to the complex I 49 kDa subunit family. As to quaternary structure, NDH-1 is composed of 14 different subunits. Subunits NuoB, C, D, E, F, and G constitute the peripheral sector of the complex.

Its subcellular location is the cell inner membrane. The catalysed reaction is a quinone + NADH + 5 H(+)(in) = a quinol + NAD(+) + 4 H(+)(out). Its function is as follows. NDH-1 shuttles electrons from NADH, via FMN and iron-sulfur (Fe-S) centers, to quinones in the respiratory chain. The immediate electron acceptor for the enzyme in this species is believed to be ubiquinone. Couples the redox reaction to proton translocation (for every two electrons transferred, four hydrogen ions are translocated across the cytoplasmic membrane), and thus conserves the redox energy in a proton gradient. This Beijerinckia indica subsp. indica (strain ATCC 9039 / DSM 1715 / NCIMB 8712) protein is NADH-quinone oxidoreductase subunit D 2.